A 2443-amino-acid polypeptide reads, in one-letter code: Non-reducing polyketide synthase olcA (2443 aa).

The 438-residue stretch at 5–442 (IEPIAIVGTG…GANVHAILES (438 aa)) folds into the Ketosynthase family 3 (KS3) domain. Catalysis depends on for beta-ketoacyl synthase activity residues C178, H317, and H362. The malonyl-CoA:ACP transacylase (MAT) domain stretch occupies residues 550–885 (GVFTGQGAQW…AAIGSLWTYL (336 aa)). S645 acts as the For acyl/malonyl transferase activity in catalysis. The segment at 940–1070 (NCLLGVLSPD…GVLTMTLGSA (131 aa)) is N-terminal hotdog fold. A PKS/mFAS DH domain is found at 940–1231 (NCLLGVLSPD…LVPLLEDLAD (292 aa)). The segment at 989 to 1497 (ALESAKLIAG…SLPVTISNMR (509 aa)) is product template (PT) domain. The segment at 1085–1231 (MRAVDIEDFY…LVPLLEDLAD (147 aa)) is C-terminal hotdog fold. Positions 1771–2159 (NKRYLAHTHV…LERFTCALPP (389 aa)) are methyltransferase (CMeT) domain. In terms of domain architecture, Carrier spans 2359-2434 (EILTSHLLTQ…EITSSAAAKL (76 aa)). At S2394 the chain carries O-(pantetheine 4'-phosphoryl)serine.

The enzyme catalyses nicotinyl-CoA + 2 malonyl-CoA + H(+) = 4-hydroxy-6-(pyridin-3-yl)-2H-pyran-2-one + 2 CO2 + 3 CoA. The protein operates within secondary metabolite biosynthesis; terpenoid biosynthesis. Non-reducing polyketide synthase; part of the gene cluster that mediates the biosynthesis of 15-deoxyoxalicine B. The first step of the pathway is the synthesis of nicotinyl-CoA from nicotinic acid by the nicotinic acid-CoA ligase olcI. Nicotinyl-CoA is then a substrate of polyketide synthase olcA to produce 4-hydroxy-6-(3-pyridinyl)-2H-pyran-2-one (HPPO) which is further prenylated by the polyprenyl transferase olcH to yield geranylgeranyl-HPPO. Geranylgeranyl pyrophosphate is provided by the cluster-specific geranylgeranyl pyrophosphate synthase olcC. The FAD-dependent monooxygenase olcE catalyzes the epoxidation of geranylgeranyl-HPPO and the terpene cyclase olcD catalyzes the cyclization of the terpenoid component, resulting in the formation of the tricyclic terpene moiety seen in predecaturin E. The cytochrome P450 monooxygenase then catalyzes the allylic oxidation of predecaturin E, which is followed by spirocylization with concomitant loss of one molecule of water to form decaturin E. Decaturin E is the substrate of the cytochrome P450 monooxygenase olcJ which hydroxylates it at the C-29 position to form decaturin F. The short-chain dehydrogenase/reductase olcF may catalyze the oxidation of decaturin F to generate the 29-hydroxyl-27-one intermediate, and subsequent hemiacetal formation probably leads to the formation of decaturin C. The dioxygenase olcK may be a peroxisomal enzyme that catalyzes the hydroxylation of decaturin C into decaturin A once decaturin C is shuttled into the peroxisome by the MFS transporter olcL. Finally the cytochrome P450 monooxygenase olcB catalyzes the oxidative rearrangement to yield 15-deoxyoxalicine B. In the absence of olcJ, decaturin E may be shunted to a pathway in which it is oxidized to a ketone, possibly by olcF, to form decaturin D, which undergoes further allylic oxidation to yield decaturin G. Moreover, in the absence of oclK or oclL, oclB can convert decaturin C into 15-deoxyoxalicine A. The polypeptide is Non-reducing polyketide synthase olcA (Penicillium canescens).